The sequence spans 313 residues: Biotin synthase (313 aa).

The 231-residue stretch at 28–258 (NFGNDIELCS…LFPQARLRLS (231 aa)) folds into the Radical SAM core domain. [4Fe-4S] cluster contacts are provided by Cys-46, Cys-50, and Cys-53. [2Fe-2S] cluster-binding residues include Cys-90, Cys-121, Cys-181, and Arg-256.

It belongs to the radical SAM superfamily. Biotin synthase family. As to quaternary structure, homodimer. [4Fe-4S] cluster serves as cofactor. [2Fe-2S] cluster is required as a cofactor.

The enzyme catalyses (4R,5S)-dethiobiotin + (sulfur carrier)-SH + 2 reduced [2Fe-2S]-[ferredoxin] + 2 S-adenosyl-L-methionine = (sulfur carrier)-H + biotin + 2 5'-deoxyadenosine + 2 L-methionine + 2 oxidized [2Fe-2S]-[ferredoxin]. Its pathway is cofactor biosynthesis; biotin biosynthesis; biotin from 7,8-diaminononanoate: step 2/2. In terms of biological role, catalyzes the conversion of dethiobiotin (DTB) to biotin by the insertion of a sulfur atom into dethiobiotin via a radical-based mechanism. This Francisella philomiragia subsp. philomiragia (strain ATCC 25017 / CCUG 19701 / FSC 153 / O#319-036) protein is Biotin synthase.